A 236-amino-acid polypeptide reads, in one-letter code: Kinetochore protein Spc25 (236 aa).

Positions 44–106 (KNIISAKEAI…DMEAQLLRHT (63 aa)) form a coiled coil. Positions 194 to 217 (EVAGASPVTPSGSERPKATSKHSN) are disordered.

It belongs to the SPC25 family. Component of the Ndc80 complex, which is composed of Ndc80, Nuf2 and Spc25.

It is found in the nucleus. The protein resides in the chromosome. Its subcellular location is the centromere. It localises to the kinetochore. Acts as a component of the essential kinetochore-associated Ndc80 complex, which is required for chromosome segregation and spindle checkpoint activity during meiosis and mitosis. Required for kinetochore integrity and the organization of stable microtubule binding sites in the outer plate of the kinetochore. Participates in SAC signaling that responds specifically to disruptions in spindle microtubule dynamics. The NDC80 complex synergistically enhances the affinity of the SKA1 complex for microtubules and may allow the NDC80 complex to track depolymerizing microtubules. In Drosophila persimilis (Fruit fly), this protein is Kinetochore protein Spc25.